Reading from the N-terminus, the 372-residue chain is Heat-inducible transcription repressor HrcA (372 aa).

This sequence belongs to the HrcA family.

Its function is as follows. Negative regulator of class I heat shock genes (grpE-dnaK-dnaJ and groELS operons). Prevents heat-shock induction of these operons. This chain is Heat-inducible transcription repressor HrcA, found in Chloroflexus aurantiacus (strain ATCC 29366 / DSM 635 / J-10-fl).